Consider the following 306-residue polypeptide: Tyrosine recombinase XerC (306 aa).

In terms of domain architecture, Core-binding (CB) spans 1-85; the sequence is MQQQLEQFLA…AIKSFFEYLQ (85 aa). Residues 106 to 289 form the Tyr recombinase domain; the sequence is FLPKAITVAQ…SNDRAVKYDQ (184 aa). Residues R147, K171, H241, R244, and H267 contribute to the active site. Y276 (O-(3'-phospho-DNA)-tyrosine intermediate) is an active-site residue.

Belongs to the 'phage' integrase family. XerC subfamily. Forms a cyclic heterotetrameric complex composed of two molecules of XerC and two molecules of XerD.

It localises to the cytoplasm. In terms of biological role, site-specific tyrosine recombinase, which acts by catalyzing the cutting and rejoining of the recombining DNA molecules. The XerC-XerD complex is essential to convert dimers of the bacterial chromosome into monomers to permit their segregation at cell division. It also contributes to the segregational stability of plasmids. This chain is Tyrosine recombinase XerC, found in Herpetosiphon aurantiacus (strain ATCC 23779 / DSM 785 / 114-95).